Reading from the N-terminus, the 205-residue chain is Beta-crystallin B2 (205 aa).

Alanine 2 carries the post-translational modification N-acetylalanine. The interval 2-16 (ASDHQSPATKQQQPS) is N-terminal arm. 2 Beta/gamma crystallin 'Greek key' domains span residues 17–56 (SKIV…LVHS) and 57–101 (GPWV…RPIK). A connecting peptide region spans residues 102-106 (VDSQE). Beta/gamma crystallin 'Greek key' domains lie at 107–148 (HKIV…RVQS) and 149–191 (GTWV…RRIR). The tract at residues 193–205 (MQWHQRGTFHPTN) is C-terminal arm.

Belongs to the beta/gamma-crystallin family. Homo/heterodimer, or complexes of higher-order. The structure of beta-crystallin oligomers seems to be stabilized through interactions between the N-terminal arms. In terms of processing, the N-terminus is blocked.

In terms of biological role, crystallins are the dominant structural components of the vertebrate eye lens. The sequence is that of Beta-crystallin B2 from Aquarana catesbeiana (American bullfrog).